Reading from the N-terminus, the 313-residue chain is Short-chain dehydrogenase/reductase family 9C member 7 (313 aa).

29-53 (FITGCDSGFGNLLARQLVDRGMRVL) is a binding site for NADP(+). Ser160 serves as a coordination point for substrate. Tyr172 acts as the Proton acceptor in catalysis. Phosphoserine is present on Ser185.

Belongs to the short-chain dehydrogenases/reductases (SDR) family.

The protein resides in the cytoplasm. The enzyme catalyses a N-[omega-(9R,10R)-epoxy-(13R)-hydroxy-(11E)-octadecenoyloxy]acyl-beta-D-glucosyl-(1&lt;-&gt;1)-sphing-4E-enine + NAD(+) = a N-[omega-(9R,10R)-epoxy-13-oxo-(11E)-octadecenoyloxy]acyl-beta-D-glucosyl-(1&lt;-&gt;1)-sphing-4E-enine + NADH + H(+). It catalyses the reaction a N-[omega-(9R,10R)-epoxy-(13R)-hydroxy-(11E)-octadecenoyloxy]-acylsphing-4E-enine + NAD(+) = a N-[omega-(9R,10R)-epoxy-13-oxo-(11E)-octadecenoyloxy]-acylsphing-4E-enine + NADH + H(+). In terms of biological role, plays a crucial role in the formation of the epidermal permeability barrier. Catalyzes the NAD+-dependent dehydrogenation of the linoleate 9,10-trans-epoxy-11E-13-alcohol esterified in omega-O-acylceramides (such as in N-[omega-(9R,10R)-epoxy-(13R)-hydroxy-(11E)-octadecenoyloxy]-acylsphing-4E-enine) to the corresponding 13-ketone, the reactive moiety required for binding of epidermal ceramides to proteins. Displays weak conversion of all-trans-retinal to all-trans-retinol in the presence of NADH. Has apparently no steroid dehydrogenase activity. In Bos taurus (Bovine), this protein is Short-chain dehydrogenase/reductase family 9C member 7 (SDR9C7).